Consider the following 236-residue polypeptide: LexA repressor (236 aa).

Positions 26–46 (FDEMKDALDLRSKSGIHRLIT) form a DNA-binding region, H-T-H motif. The disordered stretch occupies residues 85–109 (PSVIEGNLGKVRPPSPTPAEDDHDR). Active-site for autocatalytic cleavage activity residues include Ser157 and Lys195.

The protein belongs to the peptidase S24 family. In terms of assembly, homodimer.

The catalysed reaction is Hydrolysis of Ala-|-Gly bond in repressor LexA.. Represses a number of genes involved in the response to DNA damage (SOS response), including recA and lexA. In the presence of single-stranded DNA, RecA interacts with LexA causing an autocatalytic cleavage which disrupts the DNA-binding part of LexA, leading to derepression of the SOS regulon and eventually DNA repair. The protein is LexA repressor of Rhodopseudomonas palustris (strain ATCC BAA-98 / CGA009).